An 816-amino-acid polypeptide reads, in one-letter code: H(+)/Cl(-) exchange transporter 5 (816 aa).

Over 1-124 the chain is Cytoplasmic; it reads MAMWQGAMDN…WALIHSVSDA (124 aa). 2 helical membrane-spanning segments follow: residues 125–162 and 208–231; these read FSGW…ICTG and VNYF…VKVF. Positions 237-241 match the Selectivity filter part_1 motif; that stretch reads GSGIP. S238 is a binding site for chloride. The segment at residues 240-247 is an intramembrane region (helical); sequence IPEIKTIL. Transmembrane regions (helical) follow at residues 256-275 and 281-300; these read LGKW…VSSG and EGPL…HCFN. The Selectivity filter part_2 motif lies at 279–283; it reads GKEGP. 2 consecutive intramembrane regions (helical) follow at residues 312–324 and 328–336; these read VLSA…VSVA and PIGGVLFSL. 5 helical membrane-spanning segments follow: residues 348–366, 389–414, 422–442, 498–518, and 523–542; these read LWRS…RSIN, LVPF…IAWC, LGKY…ILAF, MWQL…TFGM, and GLFI…LGVG. The short motif at 523–527 is the Selectivity filter part_3 element; it reads GLFIP. F525 provides a ligand contact to chloride. The segment at residues 570–584 is an intramembrane region (helical); that stretch reads GLYAMVGAAACLGGV. Residues 585–587 constitute an intramembrane region (note=Loop between two helices); the sequence is TRM. The helical intramembrane region spans 588 to 599; it reads TVSLVVIMFELT. The note=Loop between two helices intramembrane region spans 600-604; the sequence is GGLEY. The helical transmembrane segment at 605-622 threads the bilayer; it reads IVPLMAAAMTSKWVADAL. At 623 to 816 the chain is on the cytoplasmic side; it reads GREGIYDAHI…NQDPDSILFN (194 aa). Y628 contributes to the chloride binding site. 2 consecutive CBS domains span residues 656 to 720 and 752 to 812; these read MKPR…ARKK and ILDL…DPDS. ATP-binding positions include T666, 687–689, and 794–797; these read YSG and TKKD.

This sequence belongs to the chloride channel (TC 2.A.49) family. ClC-5/CLCN5 subfamily. As to quaternary structure, interacts with NEDD4 and NEDD4L. In terms of processing, ubiquitinated by NEDD4L in the presence of albumin; which promotes endocytosis and proteasomal degradation.

The protein resides in the golgi apparatus membrane. Its subcellular location is the endosome membrane. It is found in the cell membrane. It carries out the reaction 2 chloride(in) + H(+)(out) = 2 chloride(out) + H(+)(in). In terms of biological role, proton-coupled chloride transporter. Functions as antiport system and exchanges chloride ions against protons. Important for normal acidification of the endosome lumen. May play an important role in renal tubular function. The CLC channel family contains both chloride channels and proton-coupled anion transporters that exchange chloride or another anion for protons. The absence of conserved gating glutamate residues is typical for family members that function as channels. In Pongo abelii (Sumatran orangutan), this protein is H(+)/Cl(-) exchange transporter 5 (CLCN5).